The sequence spans 268 residues: Hydroxyethylthiazole kinase (268 aa).

M45 serves as a coordination point for substrate. Residues R121 and T167 each coordinate ATP. G194 contributes to the substrate binding site.

The protein belongs to the Thz kinase family. Mg(2+) is required as a cofactor.

The catalysed reaction is 5-(2-hydroxyethyl)-4-methylthiazole + ATP = 4-methyl-5-(2-phosphooxyethyl)-thiazole + ADP + H(+). Its pathway is cofactor biosynthesis; thiamine diphosphate biosynthesis; 4-methyl-5-(2-phosphoethyl)-thiazole from 5-(2-hydroxyethyl)-4-methylthiazole: step 1/1. In terms of biological role, catalyzes the phosphorylation of the hydroxyl group of 4-methyl-5-beta-hydroxyethylthiazole (THZ). The polypeptide is Hydroxyethylthiazole kinase (Bacillus anthracis (strain A0248)).